We begin with the raw amino-acid sequence, 504 residues long: Prenylcysteine oxidase 1 (504 aa).

The signal sequence occupies residues 1–28 (MGRFAATLVGSLFGLGLLLCGLGRLASA). N-linked (GlcNAc...) asparagine glycosylation is found at N196, N322, and N352.

The protein belongs to the prenylcysteine oxidase family. It depends on FAD as a cofactor. Expressed mainly in cerebrum.

The protein resides in the lysosome. It carries out the reaction an S-polyprenyl-L-cysteine + O2 + H2O = a polyprenal + L-cysteine + H2O2. It catalyses the reaction S-(2E,6E)-farnesyl-L-cysteine + O2 + H2O = (2E,6E)-farnesal + L-cysteine + H2O2. The enzyme catalyses [(2E,6E,10E)-geranylgeranyl]-L-cysteine + O2 + H2O = (2E,6E,10E)-geranylgeranial + L-cysteine + H2O2. Its function is as follows. Prenylcysteine oxidase that cleaves the thioether bond of prenyl-L-cysteines, such as farnesylcysteine and geranylgeranylcysteine. Only active against free prenylcysteines and not prenylcysteine residues within prenylated proteins or peptides. Involved in the final step in the degradation of prenylated proteins, by degrading prenylcysteines after the protein has been degraded. The polypeptide is Prenylcysteine oxidase 1 (Rattus norvegicus (Rat)).